The chain runs to 154 residues: MTDQIYYETMYILRPDIAEDEVTNHIDKYNKLLEESGGKILDSQMRGKRRLAYQIAKHREGIYVQLSHQGDGQHIFKIEKAMRLSEDVIRYLTVKQEGPLPTPRSSNKGYNQSEKKDIESIDSTNKSEFKEEANDKKTATSESTSSQGKESQKS.

The tract at residues 94-154 (VKQEGPLPTP…SSQGKESQKS (61 aa)) is disordered. The segment covering 103–112 (PRSSNKGYNQ) has biased composition (polar residues). Basic and acidic residues predominate over residues 113–139 (SEKKDIESIDSTNKSEFKEEANDKKTA). Residues 140-154 (TSESTSSQGKESQKS) show a composition bias toward polar residues.

Belongs to the bacterial ribosomal protein bS6 family.

Functionally, binds together with bS18 to 16S ribosomal RNA. The sequence is that of Small ribosomal subunit protein bS6 from Prochlorococcus marinus subsp. pastoris (strain CCMP1986 / NIES-2087 / MED4).